A 148-amino-acid chain; its full sequence is Ponticulin-like protein D (148 aa).

Residues 1–20 (MLLNKSLLLLVAFVFAIVSA) form the signal peptide. A glycan (N-linked (GlcNAc...) asparagine) is linked at asparagine 67. Aspartate 125 carries the GPI-like-anchor amidated aspartate lipid modification. The propeptide at 126-148 (SSAAATMIASFSAILIALLFALL) is removed in mature form.

It belongs to the ponticulin family. In terms of processing, the GPI-like-anchor contains a phosphoceramide group, rather than a phosphatidyl group.

The protein localises to the cell membrane. This chain is Ponticulin-like protein D (ponD), found in Dictyostelium discoideum (Social amoeba).